We begin with the raw amino-acid sequence, 555 residues long: 2-succinyl-5-enolpyruvyl-6-hydroxy-3-cyclohexene-1-carboxylate synthase (555 aa).

It belongs to the TPP enzyme family. MenD subfamily. In terms of assembly, homodimer. Mg(2+) is required as a cofactor. Requires Mn(2+) as cofactor. Thiamine diphosphate serves as cofactor.

The catalysed reaction is isochorismate + 2-oxoglutarate + H(+) = 5-enolpyruvoyl-6-hydroxy-2-succinyl-cyclohex-3-ene-1-carboxylate + CO2. It participates in quinol/quinone metabolism; 1,4-dihydroxy-2-naphthoate biosynthesis; 1,4-dihydroxy-2-naphthoate from chorismate: step 2/7. It functions in the pathway quinol/quinone metabolism; menaquinone biosynthesis. Its function is as follows. Catalyzes the thiamine diphosphate-dependent decarboxylation of 2-oxoglutarate and the subsequent addition of the resulting succinic semialdehyde-thiamine pyrophosphate anion to isochorismate to yield 2-succinyl-5-enolpyruvyl-6-hydroxy-3-cyclohexene-1-carboxylate (SEPHCHC). This is 2-succinyl-5-enolpyruvyl-6-hydroxy-3-cyclohexene-1-carboxylate synthase from Bacteroides thetaiotaomicron (strain ATCC 29148 / DSM 2079 / JCM 5827 / CCUG 10774 / NCTC 10582 / VPI-5482 / E50).